A 1020-amino-acid polypeptide reads, in one-letter code: P3N-PIPO polyprotein (1020 aa).

The Peptidase S30 domain maps to 165-308 (RMSEASLQLF…KKQSNEIIHY (144 aa)). Catalysis depends on for P1 proteinase activity residues histidine 216, aspartate 225, and serine 259. An Involved in interaction with stylet and aphid transmission motif is present at residues 360–363 (KITC). Residues 618 to 620 (PTK) carry the Involved in virions binding and aphid transmission motif. The 123-residue stretch at 644-766 (MFIAKAGYCY…DSNMKTYLVG (123 aa)) folds into the Peptidase C6 domain. Catalysis depends on for helper component proteinase activity residues cysteine 652 and histidine 725.

This sequence belongs to the potyviridae P3N-PIPO polyprotein family. In terms of assembly, interacts (via PIPO domain) with host PCaP1 protein; this interaction may help to anchor the movement complex to the plasma membrane from which the complex could move to the plasmodesmata. Potyviral RNA is expressed as two polyproteins which undergo post-translational proteolytic processing. Genome polyprotein is processed by NIa-pro, P1 and HC-pro proteinases resulting in the production of at least ten individual proteins. P3N-PIPO is cleaved by P1 and HC-pro proteinases resulting in the production of three individual proteins. The P1 proteinase and the HC-pro cleave only their respective C-termini autocatalytically.

It is found in the host cell junction. The protein localises to the host plasmodesma. The catalysed reaction is Hydrolyzes a Gly-|-Gly bond at its own C-terminus, commonly in the sequence -Tyr-Xaa-Val-Gly-|-Gly, in the processing of the potyviral polyprotein.. Functionally, required for aphid transmission and also has proteolytic activity. Only cleaves a Gly-Gly dipeptide at its own C-terminus. Interacts with virions and aphid stylets. Acts as a suppressor of RNA-mediated gene silencing, also known as post-transcriptional gene silencing (PTGS), a mechanism of plant viral defense that limits the accumulation of viral RNAs. May have RNA-binding activity. Allows efficient cell to cell propagation, by bypassing the host cell wall barrier. Transports viral genome to neighboring plant cells directly through plasmosdesmata, without any budding. The sequence is that of P3N-PIPO polyprotein from Plum pox potyvirus (isolate NAT) (PPV).